Reading from the N-terminus, the 390-residue chain is Probable tRNA pseudouridine synthase D (390 aa).

Asp-93 functions as the Nucleophile in the catalytic mechanism. Residues 166 to 353 (YVLNYYGIQR…YGTRRKMITP (188 aa)) form the TRUD domain.

The protein belongs to the pseudouridine synthase TruD family.

It catalyses the reaction uridine(13) in tRNA = pseudouridine(13) in tRNA. Functionally, could be responsible for synthesis of pseudouridine from uracil-13 in transfer RNAs. This Methanococcus maripaludis (strain C5 / ATCC BAA-1333) protein is Probable tRNA pseudouridine synthase D.